Here is a 231-residue protein sequence, read N- to C-terminus: Small ribosomal subunit protein uS3 (231 aa).

The KH type-2 domain occupies 39 to 107 (IRKFIMKTLP…GVSLNIVEIR (69 aa)).

Belongs to the universal ribosomal protein uS3 family. In terms of assembly, part of the 30S ribosomal subunit. Forms a tight complex with proteins S10 and S14.

In terms of biological role, binds the lower part of the 30S subunit head. Binds mRNA in the 70S ribosome, positioning it for translation. The chain is Small ribosomal subunit protein uS3 from Zymomonas mobilis subsp. mobilis (strain ATCC 31821 / ZM4 / CP4).